The primary structure comprises 304 residues: Mas-related G-protein coupled receptor member A (304 aa).

Residues 1-17 (MDKTIPGSFNSRTLIPN) lie on the Extracellular side of the membrane. The chain crosses the membrane as a helical span at residues 18–38 (LLIIISGLVGLIGNAMVFWLL). Over 39–46 (GFRLARNA) the chain is Cytoplasmic. Residues 47–67 (FSVYILNLALADFLFLLCHII) form a helical membrane-spanning segment. Topologically, residues 68-80 (DSTLLLLKFSYPN) are extracellular. The chain crosses the membrane as a helical span at residues 81–101 (IIFLPCFNTVMMVPYIAGLSM). Residues 102–132 (LSAISTERCLSVVCPIWYRCRRPKHTSTVMC) lie on the Cytoplasmic side of the membrane. Residues 133 to 153 (SAIWVLSLLICILNRYFCGFL) form a helical membrane-spanning segment. The Extracellular segment spans residues 154-167 (DTKYEKDNRCLASN). The helical transmembrane segment at 168 to 188 (FFTAACLIFLFVVLCLSSLAL) threads the bilayer. Over 189–211 (LVRLFCGAGRMKLTRLYATIMLT) the chain is Cytoplasmic. The helical transmembrane segment at 212-232 (VLVFLLCGLPFGIHWFLLIWI) threads the bilayer. Residues 233-244 (KIDYGKFAYGLY) are Extracellular-facing. The chain crosses the membrane as a helical span at residues 245-265 (LAALVLTAVNSCANPIIYFFV). Residues 266–304 (GSFRHQKHQTLKMVLQRALQDTPETAENTVEMSSSKVEP) lie on the Cytoplasmic side of the membrane.

It belongs to the G-protein coupled receptor 1 family. Mas subfamily. Expressed in a subset of IB4-positive small diameter nociceptive dorsal root neurons.

It is found in the cell membrane. Its function is as follows. Orphan receptor activated by a subset of RFamide-family neuropeptides such as FLRF-amide and FMRF-amide. Mediates its action by association with G proteins that activate a phosphatidylinositol-calcium second messenger system. Its effect is mediated by G(q) and G(11) proteins. May regulate the function of nociceptive neurons by modulation of pain perception. The protein is Mas-related G-protein coupled receptor member A (Mrgpra) of Rattus norvegicus (Rat).